A 189-amino-acid polypeptide reads, in one-letter code: Interferon alpha-1/13 (189 aa).

An N-terminal signal peptide occupies residues 1-23; sequence MASPFALLMVLVVLSCKSSCSLG. Disulfide bonds link C24-C122 and C52-C162.

It belongs to the alpha/beta interferon family. In terms of assembly, interacts with CR2.

Its subcellular location is the secreted. Its function is as follows. Produced by macrophages, IFN-alpha have antiviral activities. Interferon stimulates the production of two enzymes: a protein kinase and an oligoadenylate synthetase. This Homo sapiens (Human) protein is Interferon alpha-1/13 (IFNA1).